The sequence spans 687 residues: Polyphosphate kinase (687 aa).

Asn45 serves as a coordination point for ATP. Arg375 and Arg405 together coordinate Mg(2+). His435 acts as the Phosphohistidine intermediate in catalysis. ATP is bound by residues Tyr472, Arg568, and His596.

The protein belongs to the polyphosphate kinase 1 (PPK1) family. It depends on Mg(2+) as a cofactor. In terms of processing, an intermediate of this reaction is the autophosphorylated ppk in which a phosphate is covalently linked to a histidine residue through a N-P bond.

The catalysed reaction is [phosphate](n) + ATP = [phosphate](n+1) + ADP. Its function is as follows. Catalyzes the reversible transfer of the terminal phosphate of ATP to form a long-chain polyphosphate (polyP). This chain is Polyphosphate kinase, found in Burkholderia cenocepacia (strain HI2424).